The sequence spans 404 residues: Ubiquitin-like modifier-activating enzyme 5 (404 aa).

ATP-binding residues include G83, D104, K127, N150, and N184. Positions 226 and 229 each coordinate Zn(2+). Residue C250 is the Glycyl thioester intermediate of the active site. 2 residues coordinate Zn(2+): C303 and C308. The interval 372–404 is disordered; that stretch reads APEKSSETSEETVSAATADETSLEDLMAQMKSM. The segment covering 382–391 has biased composition (low complexity); that stretch reads ETVSAATADE.

It belongs to the ubiquitin-activating E1 family. UBA5 subfamily. Interacts (via C-terminus) with Ufc1. Interacts with Ufm1.

The protein resides in the cytoplasm. It is found in the nucleus. It localises to the golgi apparatus. Functionally, E1-like enzyme which activates UFM1. In Drosophila melanogaster (Fruit fly), this protein is Ubiquitin-like modifier-activating enzyme 5.